The following is a 75-amino-acid chain: Translational regulator CsrA (75 aa).

The protein belongs to the CsrA/RsmA family. In terms of assembly, homodimer; the beta-strands of each monomer intercalate to form a hydrophobic core, while the alpha-helices form wings that extend away from the core.

The protein resides in the cytoplasm. A translational regulator that binds mRNA to regulate translation initiation and/or mRNA stability. Usually binds in the 5'-UTR at or near the Shine-Dalgarno sequence preventing ribosome-binding, thus repressing translation. Its main target seems to be the major flagellin gene, while its function is anatagonized by FliW. This is Translational regulator CsrA from Treponema denticola (strain ATCC 35405 / DSM 14222 / CIP 103919 / JCM 8153 / KCTC 15104).